The following is a 253-amino-acid chain: MQSITIRNTVIGEGLPKIIVPLMAAGEKELLEEIEAVNRLRPDIIEWRADVYEHVDSLDAVKDMLEMLRKAAGATPLLFTFRTHKEGGNKVIDDRFYIELLKTAIETKHIDLADVELFTGEAEVKLIVKTAEDNGVYVVMSNHDFHQTPKKEEIISRLRNMQAYGAHIPKIAVMPQSTEDVFVLLDATHTMKTQYADRPIITMSMAGTGLISRLAGEVFGSACTFGAGKEASAPGQIPVEELRSVLSILNKHM.

Residues 46–48 and Arg-82 each bind 3-dehydroquinate; that span reads EWR. The active-site Proton donor/acceptor is His-143. The Schiff-base intermediate with substrate role is filled by Lys-170. 3-dehydroquinate contacts are provided by Arg-213, Ser-232, and Gln-236.

The protein belongs to the type-I 3-dehydroquinase family. As to quaternary structure, homodimer.

It carries out the reaction 3-dehydroquinate = 3-dehydroshikimate + H2O. Its pathway is metabolic intermediate biosynthesis; chorismate biosynthesis; chorismate from D-erythrose 4-phosphate and phosphoenolpyruvate: step 3/7. Its function is as follows. Involved in the third step of the chorismate pathway, which leads to the biosynthesis of aromatic amino acids. Catalyzes the cis-dehydration of 3-dehydroquinate (DHQ) and introduces the first double bond of the aromatic ring to yield 3-dehydroshikimate. In Bacillus velezensis (strain DSM 23117 / BGSC 10A6 / LMG 26770 / FZB42) (Bacillus amyloliquefaciens subsp. plantarum), this protein is 3-dehydroquinate dehydratase.